The following is a 209-amino-acid chain: ATP-dependent Clp protease proteolytic subunit (209 aa).

Ser-106 functions as the Nucleophile in the catalytic mechanism. His-131 is a catalytic residue.

It belongs to the peptidase S14 family. As to quaternary structure, fourteen ClpP subunits assemble into 2 heptameric rings which stack back to back to give a disk-like structure with a central cavity, resembling the structure of eukaryotic proteasomes.

It localises to the cytoplasm. The enzyme catalyses Hydrolysis of proteins to small peptides in the presence of ATP and magnesium. alpha-casein is the usual test substrate. In the absence of ATP, only oligopeptides shorter than five residues are hydrolyzed (such as succinyl-Leu-Tyr-|-NHMec, and Leu-Tyr-Leu-|-Tyr-Trp, in which cleavage of the -Tyr-|-Leu- and -Tyr-|-Trp bonds also occurs).. Cleaves peptides in various proteins in a process that requires ATP hydrolysis. Has a chymotrypsin-like activity. Plays a major role in the degradation of misfolded proteins. The sequence is that of ATP-dependent Clp protease proteolytic subunit from Brucella canis (strain ATCC 23365 / NCTC 10854 / RM-666).